Reading from the N-terminus, the 361-residue chain is 3-dehydroquinate synthase (361 aa).

NAD(+)-binding positions include 106-110 (GVVGD), 130-131 (TT), Lys-143, and Lys-152. Residues Glu-185, His-248, and His-265 each coordinate Zn(2+).

It belongs to the sugar phosphate cyclases superfamily. Dehydroquinate synthase family. Requires NAD(+) as cofactor. Co(2+) serves as cofactor. Zn(2+) is required as a cofactor.

It localises to the cytoplasm. The enzyme catalyses 7-phospho-2-dehydro-3-deoxy-D-arabino-heptonate = 3-dehydroquinate + phosphate. Its pathway is metabolic intermediate biosynthesis; chorismate biosynthesis; chorismate from D-erythrose 4-phosphate and phosphoenolpyruvate: step 2/7. Its function is as follows. Catalyzes the conversion of 3-deoxy-D-arabino-heptulosonate 7-phosphate (DAHP) to dehydroquinate (DHQ). This is 3-dehydroquinate synthase from Leptospira interrogans serogroup Icterohaemorrhagiae serovar copenhageni (strain Fiocruz L1-130).